Consider the following 865-residue polypeptide: General transcription factor 3C polypeptide 5 (865 aa).

Disordered regions lie at residues 1–21, 111–163, 191–215, 391–522, and 669–865; these read MNDE…NNNS, RPNK…NEKF, NNNT…TVPI, QDNH…NKEG, and DNKM…EESE. Low complexity-rich tracts occupy residues 7–21, 115–126, 140–158, 199–210, and 401–411; these read KNNS…NNNS, QQTQTQTQTQTQ, QSPK…QQPQ, DNVNDSSSSSSS, and SKNNNNNNNNK. Basic and acidic residues-rich tracts occupy residues 412-439 and 448-489; these read DSIK…KQEE and NNEK…KGDD. Low complexity-rich tracts occupy residues 508–521 and 677–696; these read EGNN…NNKE and RSNT…PKST. Composition is skewed to basic and acidic residues over residues 697-713, 757-766, and 773-786; these read QPKE…EPRP, QNKEIDESLK, and MEKD…KNEE. Composition is skewed to acidic residues over residues 800–820 and 839–865; these read DYDD…DFDG and EDSE…EESE.

The protein belongs to the TFIIIC subunit 5 family. Part of the TFIIIC complex.

The protein resides in the nucleus. Its function is as follows. Involved in RNA polymerase III-mediated transcription. Integral, tightly associated component of the DNA-binding TFIIIC2 subcomplex that directly binds tRNA and virus-associated RNA promoters. This Dictyostelium discoideum (Social amoeba) protein is General transcription factor 3C polypeptide 5 (gtf3c5).